We begin with the raw amino-acid sequence, 508 residues long: Hydroxymethylglutaryl-CoA synthase, mitochondrial (508 aa).

A mitochondrion-targeting transit peptide spans 1–37; that stretch reads MQRLLTPVRQVLRVKRAMQEASFMPPLLPPAAHQRFS. Lys-52 carries the post-translational modification N6-succinyllysine. Glu-80 and Ala-81 together coordinate (3S)-3-hydroxy-3-methylglutaryl-CoA. Residue Glu-132 is the Proton donor/acceptor of the active site. Cys-166, Asn-204, and Thr-208 together coordinate (3S)-3-hydroxy-3-methylglutaryl-CoA. Residue Cys-166 is the Acyl-thioester intermediate of the active site. Residue Lys-243 is modified to N6-acetyllysine. Residue Lys-256 is modified to N6-acetyllysine; alternate. Lys-256 is modified (N6-succinyllysine; alternate). (3S)-3-hydroxy-3-methylglutaryl-CoA contacts are provided by Ser-258 and His-301. His-301 serves as the catalytic Proton donor/acceptor. An N6-acetyllysine modification is found at Lys-306. Lys-310 lines the (3S)-3-hydroxy-3-methylglutaryl-CoA pocket. Lys-310 is modified (N6-acetyllysine; alternate). Residue Lys-310 is modified to N6-succinyllysine; alternate. Lys-333 is modified (N6-succinyllysine). An N6-acetyllysine; alternate mark is found at Lys-342, Lys-350, Lys-354, and Lys-358. N6-succinyllysine; alternate is present on residues Lys-342, Lys-350, Lys-354, and Lys-358. Residues Asn-380 and Ser-414 each coordinate (3S)-3-hydroxy-3-methylglutaryl-CoA. The residue at position 433 (Ser-433) is a Phosphoserine. Lys-437 is subject to N6-acetyllysine. Phosphoserine is present on residues Ser-440 and Ser-456. Lys-473 carries the N6-acetyllysine; alternate modification. The residue at position 473 (Lys-473) is an N6-succinyllysine; alternate.

Belongs to the thiolase-like superfamily. HMG-CoA synthase family. As to quaternary structure, homodimer. Succinylated. Desuccinylated by SIRT5. Succinylation, at least at Lys-310, inhibits the enzymatic activity.

It is found in the mitochondrion. It catalyses the reaction acetoacetyl-CoA + acetyl-CoA + H2O = (3S)-3-hydroxy-3-methylglutaryl-CoA + CoA + H(+). Its pathway is metabolic intermediate biosynthesis; (R)-mevalonate biosynthesis; (R)-mevalonate from acetyl-CoA: step 2/3. In terms of biological role, catalyzes the first irreversible step in ketogenesis, condensing acetyl-CoA to acetoacetyl-CoA to form HMG-CoA, which is converted by HMG-CoA reductase (HMGCR) into mevalonate. The chain is Hydroxymethylglutaryl-CoA synthase, mitochondrial (HMGCS2) from Sus scrofa (Pig).